The following is a 591-amino-acid chain: MKKISLPKIGIRPVIDGRRMGVRESLEEQTMNMAKATAVLITEKIRHACGAQVECVIADTCIAGMAESAACEEKFSSQNVGVTITVTPCWCYGSETIDMDPMRPKAIWGFNGTERPGAVYLAAALAAHSQKGIPAFSIYGHDVQDADDTSIPADVEEKLLRFARAGLAVASMKGKSYLSVGGVSMGIAGSIVDHNFFESWLGMKVQAVDMTELRRRIDQKIYDEAELEMALAWADKNFRYGEDQNASQYKRNEAQNRAVLKESLLMAMCIRDMMQGNKTLAGKGLVEESLGYNAIAAGFQGQRHWTDQYPNGDTAEALLNSSFDWNGVREPFVVATENDSLNGVAMLFGHQLTGTAQIFADVRTYWSPEAVERVTGQALSGLAEHGIIHLINSGSAALDGACKQRDSEGKPTMKPHWEISQQEADACLAATEWCPAIHEYFRGGGYSSRFLTEGGVPFTMTRVNIIKGLGPVLQIAEGWSVELPKAMHDQLDARTNSTWPTTWFAPRLTGKGPFTDVYSVMANWGANHGVLTIGHVGADFITLAAMLRIPVCMHNVEEAKIYRPSAWAAHGMDIEGQDYRACQNYGPLYKR.

Active-site proton acceptor residues include glutamate 337 and aspartate 361. Mn(2+) contacts are provided by glutamate 337, aspartate 361, and histidine 528.

This sequence belongs to the L-fucose isomerase family. Homohexamer. Mn(2+) is required as a cofactor.

Its subcellular location is the cytoplasm. The catalysed reaction is L-fucose = L-fuculose. It functions in the pathway carbohydrate degradation; L-fucose degradation; L-lactaldehyde and glycerone phosphate from L-fucose: step 1/3. In terms of biological role, converts the aldose L-fucose into the corresponding ketose L-fuculose. The polypeptide is L-fucose isomerase (Salmonella heidelberg (strain SL476)).